The primary structure comprises 252 residues: Chitooligosaccharide deacetylase (252 aa).

Residues His-61 and His-125 each coordinate Mg(2+).

Belongs to the YdjC deacetylase family. ChbG subfamily. In terms of assembly, homodimer. Requires Mg(2+) as cofactor.

It localises to the cytoplasm. It catalyses the reaction N,N'-diacetylchitobiose + H2O = N-acetyl-beta-D-glucosaminyl-(1-&gt;4)-D-glucosamine + acetate. The catalysed reaction is diacetylchitobiose-6'-phosphate + H2O = N'-monoacetylchitobiose-6'-phosphate + acetate. The protein operates within glycan degradation; chitin degradation. In terms of biological role, involved in the degradation of chitin. ChbG is essential for growth on the acetylated chitooligosaccharides chitobiose and chitotriose but is dispensable for growth on cellobiose and chitosan dimer, the deacetylated form of chitobiose. Deacetylation of chitobiose-6-P and chitotriose-6-P is necessary for both the activation of the chb promoter by the regulatory protein ChbR and the hydrolysis of phosphorylated beta-glucosides by the phospho-beta-glucosidase ChbF. Catalyzes the removal of only one acetyl group from chitobiose-6-P to yield monoacetylchitobiose-6-P, the inducer of ChbR and the substrate of ChbF. This Escherichia coli O127:H6 (strain E2348/69 / EPEC) protein is Chitooligosaccharide deacetylase.